The sequence spans 280 residues: Large ribosomal subunit protein uL2 (280 aa).

Disordered stretches follow at residues 27-58 (STPE…GGGH) and 226-280 (MNPV…KHGR). Basic residues-rich tracts occupy residues 37-58 (LHGH…GGGH) and 268-280 (IVRR…KHGR).

It belongs to the universal ribosomal protein uL2 family. As to quaternary structure, part of the 50S ribosomal subunit. Forms a bridge to the 30S subunit in the 70S ribosome.

Functionally, one of the primary rRNA binding proteins. Required for association of the 30S and 50S subunits to form the 70S ribosome, for tRNA binding and peptide bond formation. It has been suggested to have peptidyltransferase activity; this is somewhat controversial. Makes several contacts with the 16S rRNA in the 70S ribosome. The protein is Large ribosomal subunit protein uL2 of Mycobacterium ulcerans (strain Agy99).